A 594-amino-acid polypeptide reads, in one-letter code: UvrABC system protein C (594 aa).

Residues 14–91 (DSPGCYLHKD…IQENMPKYNI (78 aa)) enclose the GIY-YIG domain. Residues 196–231 (DKIIDDLRSKMLEASHNQEFERAAEYRDLISGIATM) enclose the UVR domain.

This sequence belongs to the UvrC family. As to quaternary structure, interacts with UvrB in an incision complex.

The protein resides in the cytoplasm. The UvrABC repair system catalyzes the recognition and processing of DNA lesions. UvrC both incises the 5' and 3' sides of the lesion. The N-terminal half is responsible for the 3' incision and the C-terminal half is responsible for the 5' incision. This Streptococcus equi subsp. zooepidemicus (strain H70) protein is UvrABC system protein C.